The sequence spans 355 residues: Peptide chain release factor 1 (355 aa).

The residue at position 233 (Gln-233) is an N5-methylglutamine.

It belongs to the prokaryotic/mitochondrial release factor family. Post-translationally, methylated by PrmC. Methylation increases the termination efficiency of RF1.

It is found in the cytoplasm. Peptide chain release factor 1 directs the termination of translation in response to the peptide chain termination codons UAG and UAA. This chain is Peptide chain release factor 1, found in Bacillus cytotoxicus (strain DSM 22905 / CIP 110041 / 391-98 / NVH 391-98).